Reading from the N-terminus, the 377-residue chain is Nitric oxide reductase FlRd-NAD(+) reductase (377 aa).

Belongs to the FAD-dependent oxidoreductase family. It depends on FAD as a cofactor.

Its subcellular location is the cytoplasm. It catalyses the reaction 2 reduced [nitric oxide reductase rubredoxin domain] + NAD(+) + H(+) = 2 oxidized [nitric oxide reductase rubredoxin domain] + NADH. It participates in nitrogen metabolism; nitric oxide reduction. Its function is as follows. One of at least two accessory proteins for anaerobic nitric oxide (NO) reductase. Reduces the rubredoxin moiety of NO reductase. This is Nitric oxide reductase FlRd-NAD(+) reductase (norW) from Shigella boydii serotype 4 (strain Sb227).